A 430-amino-acid polypeptide reads, in one-letter code: Serine hydroxymethyltransferase (430 aa).

(6S)-5,6,7,8-tetrahydrofolate is bound by residues leucine 123 and 127 to 129 (GHL). The residue at position 232 (lysine 232) is an N6-(pyridoxal phosphate)lysine. Position 248 (glutamate 248) interacts with (6S)-5,6,7,8-tetrahydrofolate.

The protein belongs to the SHMT family. Homodimer. It depends on pyridoxal 5'-phosphate as a cofactor.

The protein resides in the cytoplasm. The enzyme catalyses (6R)-5,10-methylene-5,6,7,8-tetrahydrofolate + glycine + H2O = (6S)-5,6,7,8-tetrahydrofolate + L-serine. It participates in one-carbon metabolism; tetrahydrofolate interconversion. Its pathway is amino-acid biosynthesis; glycine biosynthesis; glycine from L-serine: step 1/1. Its function is as follows. Catalyzes the reversible interconversion of serine and glycine with tetrahydrofolate (THF) serving as the one-carbon carrier. This reaction serves as the major source of one-carbon groups required for the biosynthesis of purines, thymidylate, methionine, and other important biomolecules. Also exhibits THF-independent aldolase activity toward beta-hydroxyamino acids, producing glycine and aldehydes, via a retro-aldol mechanism. The sequence is that of Serine hydroxymethyltransferase from Anaplasma marginale (strain St. Maries).